A 396-amino-acid chain; its full sequence is Imidazolonepropionase (396 aa).

2 residues coordinate Fe(3+): histidine 69 and histidine 71. Histidine 69 and histidine 71 together coordinate Zn(2+). Positions 78, 136, and 163 each coordinate 4-imidazolone-5-propanoate. Tyrosine 136 contacts N-formimidoyl-L-glutamate. Histidine 224 contacts Fe(3+). Histidine 224 lines the Zn(2+) pocket. Glutamine 227 is a binding site for 4-imidazolone-5-propanoate. Position 298 (aspartate 298) interacts with Fe(3+). Residue aspartate 298 coordinates Zn(2+). N-formimidoyl-L-glutamate contacts are provided by asparagine 300 and glycine 302. Threonine 303 lines the 4-imidazolone-5-propanoate pocket.

The protein belongs to the metallo-dependent hydrolases superfamily. HutI family. Zn(2+) serves as cofactor. It depends on Fe(3+) as a cofactor.

The protein localises to the cytoplasm. The enzyme catalyses 4-imidazolone-5-propanoate + H2O = N-formimidoyl-L-glutamate. Its pathway is amino-acid degradation; L-histidine degradation into L-glutamate; N-formimidoyl-L-glutamate from L-histidine: step 3/3. Catalyzes the hydrolytic cleavage of the carbon-nitrogen bond in imidazolone-5-propanoate to yield N-formimidoyl-L-glutamate. It is the third step in the universal histidine degradation pathway. The sequence is that of Imidazolonepropionase from Cutibacterium acnes (strain DSM 16379 / KPA171202) (Propionibacterium acnes).